Here is a 333-residue protein sequence, read N- to C-terminus: L-lactate dehydrogenase A chain (333 aa).

NAD(+) contacts are provided by residues 30–58 and Arg-100; that span reads GMVG…MEDK. Substrate contacts are provided by Arg-107, Asn-139, and Arg-170. Asn-139 is an NAD(+) binding site. His-194 serves as the catalytic Proton acceptor. Thr-249 is a binding site for substrate.

It belongs to the LDH/MDH superfamily. LDH family. Homotetramer.

Its subcellular location is the cytoplasm. It carries out the reaction (S)-lactate + NAD(+) = pyruvate + NADH + H(+). Its pathway is fermentation; pyruvate fermentation to lactate; (S)-lactate from pyruvate: step 1/1. Its function is as follows. Interconverts simultaneously and stereospecifically pyruvate and lactate with concomitant interconversion of NADH and NAD(+). This is L-lactate dehydrogenase A chain (ldha) from Danio rerio (Zebrafish).